We begin with the raw amino-acid sequence, 350 residues long: Ketol-acid reductoisomerase (NADP(+)) (350 aa).

Residues 3-183 (AQIWYEDDGD…GALRAGAIKT (181 aa)) enclose the KARI N-terminal Rossmann domain. NADP(+) is bound by residues 26–29 (YGSQ), Arg-49, Ser-52, Ser-54, and 84–87 (DQYQ). His-109 is a catalytic residue. Position 135 (Gly-135) interacts with NADP(+). The KARI C-terminal knotted domain maps to 184 to 327 (TFKEETETDL…PKLRAMFSWN (144 aa)). Residues Asp-192, Glu-196, Glu-228, and Glu-232 each contribute to the Mg(2+) site. Ser-253 provides a ligand contact to substrate.

Belongs to the ketol-acid reductoisomerase family. Mg(2+) serves as cofactor.

The enzyme catalyses (2R)-2,3-dihydroxy-3-methylbutanoate + NADP(+) = (2S)-2-acetolactate + NADPH + H(+). It catalyses the reaction (2R,3R)-2,3-dihydroxy-3-methylpentanoate + NADP(+) = (S)-2-ethyl-2-hydroxy-3-oxobutanoate + NADPH + H(+). Its pathway is amino-acid biosynthesis; L-isoleucine biosynthesis; L-isoleucine from 2-oxobutanoate: step 2/4. It participates in amino-acid biosynthesis; L-valine biosynthesis; L-valine from pyruvate: step 2/4. Functionally, involved in the biosynthesis of branched-chain amino acids (BCAA). Catalyzes an alkyl-migration followed by a ketol-acid reduction of (S)-2-acetolactate (S2AL) to yield (R)-2,3-dihydroxy-isovalerate. In the isomerase reaction, S2AL is rearranged via a Mg-dependent methyl migration to produce 3-hydroxy-3-methyl-2-ketobutyrate (HMKB). In the reductase reaction, this 2-ketoacid undergoes a metal-dependent reduction by NADPH to yield (R)-2,3-dihydroxy-isovalerate. This is Ketol-acid reductoisomerase (NADP(+)) from Bifidobacterium animalis subsp. lactis (strain AD011).